We begin with the raw amino-acid sequence, 272 residues long: Cell division protein DivIB (272 aa).

The Cytoplasmic segment spans residues 1–21 (MRLSSHGKKTVSTSNNPVFNR). The helical transmembrane segment at 22–42 (IGLFFTAAILFALFLQMLFFL) threads the bilayer. The region spanning 43 to 115 (RPWQDIKETK…GTAIIRVNEN (73 aa)) is the POTRA domain. The Extracellular portion of the chain corresponds to 43–272 (RPWQDIKETK…SSSKSSNSSK (230 aa)). Residues 253-272 (LSSLSSDKSKSSSKSSNSSK) form a disordered region.

This sequence belongs to the FtsQ/DivIB family. DivIB subfamily.

The protein localises to the cell membrane. In terms of biological role, cell division protein that may be involved in stabilizing or promoting the assembly of the division complex. The polypeptide is Cell division protein DivIB (Oenococcus oeni (strain ATCC BAA-331 / PSU-1)).